We begin with the raw amino-acid sequence, 276 residues long: Rhomboid protease GlpG (276 aa).

A run of 6 helical transmembrane segments spans residues glycine 94–leucine 114, alanine 142–glycine 162, leucine 169–glutamine 189, phenylalanine 192–tryptophan 212, leucine 229–methionine 249, and alanine 250–leucine 270. The active-site Nucleophile is the serine 201. Histidine 254 is a catalytic residue.

Belongs to the peptidase S54 family.

It is found in the cell inner membrane. It catalyses the reaction Cleaves type-1 transmembrane domains using a catalytic dyad composed of serine and histidine that are contributed by different transmembrane domains.. Its function is as follows. Rhomboid-type serine protease that catalyzes intramembrane proteolysis. In Escherichia fergusonii (strain ATCC 35469 / DSM 13698 / CCUG 18766 / IAM 14443 / JCM 21226 / LMG 7866 / NBRC 102419 / NCTC 12128 / CDC 0568-73), this protein is Rhomboid protease GlpG.